Consider the following 292-residue polypeptide: NAD kinase (292 aa).

The active-site Proton acceptor is Asp-73. Residues 73–74 (DG), 147–148 (NE), His-158, Arg-175, Asp-177, 188–193 (TAYSLS), and Gln-247 each bind NAD(+).

This sequence belongs to the NAD kinase family. It depends on a divalent metal cation as a cofactor.

The protein resides in the cytoplasm. It catalyses the reaction NAD(+) + ATP = ADP + NADP(+) + H(+). Its function is as follows. Involved in the regulation of the intracellular balance of NAD and NADP, and is a key enzyme in the biosynthesis of NADP. Catalyzes specifically the phosphorylation on 2'-hydroxyl of the adenosine moiety of NAD to yield NADP. In Salmonella choleraesuis (strain SC-B67), this protein is NAD kinase.